The chain runs to 438 residues: Tol-Pal system protein TolB (438 aa).

The signal sequence occupies residues 1–36; sequence MTPAFRRADLTGFLRTYGAALILLLAAMLAWQPAQA.

The protein belongs to the TolB family. As to quaternary structure, the Tol-Pal system is composed of five core proteins: the inner membrane proteins TolA, TolQ and TolR, the periplasmic protein TolB and the outer membrane protein Pal. They form a network linking the inner and outer membranes and the peptidoglycan layer.

It is found in the periplasm. In terms of biological role, part of the Tol-Pal system, which plays a role in outer membrane invagination during cell division and is important for maintaining outer membrane integrity. The sequence is that of Tol-Pal system protein TolB from Bordetella pertussis (strain Tohama I / ATCC BAA-589 / NCTC 13251).